The chain runs to 226 residues: Insulin-like growth factor-binding protein 6 (226 aa).

A signal peptide spans 1 to 25; that stretch reads MTWDGLPTQPLLMLLMLLFAAGSES. The 74-residue stretch at 26–99 folds into the IGFBP N-terminal domain; that stretch reads ALAGCPGCGP…LIGQGRCQRA (74 aa). Disulfide bonds link Cys-30/Cys-33, Cys-49/Cys-55, Cys-63/Cys-76, and Cys-70/Cys-96. The disordered stretch occupies residues 92–148; the sequence is GQGRCQRARGPSEETTKESKPHGGASRPRDRDRQKNPRTSAAPIRPSPVQDGEMGPC. Residues 101–126 are compositionally biased toward basic and acidic residues; it reads GPSEETTKESKPHGGASRPRDRDRQK. One can recognise a Thyroglobulin type-1 domain in the interval 145–220; that stretch reads MGPCRRHLDS…SPDGQGSSQC (76 aa). 3 disulfide bridges follow: Cys-148–Cys-176, Cys-187–Cys-198, and Cys-200–Cys-220. The segment at 205–226 is disordered; that stretch reads GQPLPVSPDGQGSSQCSARSSG. The span at 214–226 shows a compositional bias: polar residues; sequence GQGSSQCSARSSG.

In terms of assembly, interacts (via C-terminal domain) with PHB2. Post-translationally, O-glycosylated.

The protein resides in the secreted. Its function is as follows. IGF-binding proteins prolong the half-life of the IGFs and have been shown to either inhibit or stimulate the growth promoting effects of the IGFs on cell culture. They alter the interaction of IGFs with their cell surface receptors. Activates the MAPK signaling pathway and induces cell migration. This is Insulin-like growth factor-binding protein 6 (Igfbp6) from Rattus norvegicus (Rat).